A 687-amino-acid chain; its full sequence is Polyphosphate kinase (687 aa).

ATP is bound at residue asparagine 45. Mg(2+)-binding residues include arginine 375 and arginine 405. Histidine 435 (phosphohistidine intermediate) is an active-site residue. ATP-binding residues include tyrosine 472, arginine 568, and histidine 596.

This sequence belongs to the polyphosphate kinase 1 (PPK1) family. Mg(2+) serves as cofactor. An intermediate of this reaction is the autophosphorylated ppk in which a phosphate is covalently linked to a histidine residue through a N-P bond.

The catalysed reaction is [phosphate](n) + ATP = [phosphate](n+1) + ADP. Functionally, catalyzes the reversible transfer of the terminal phosphate of ATP to form a long-chain polyphosphate (polyP). In Burkholderia ambifaria (strain ATCC BAA-244 / DSM 16087 / CCUG 44356 / LMG 19182 / AMMD) (Burkholderia cepacia (strain AMMD)), this protein is Polyphosphate kinase.